Here is a 355-residue protein sequence, read N- to C-terminus: uncharacterized protein (355 aa).

Disordered stretches follow at residues 1–121 (MPID…MELR), 226–253 (RLMN…KSSM), and 336–355 (NLHR…RKRT). Residues 24–37 (LESESSSESDYEEV) are compositionally biased toward acidic residues. The span at 65-87 (ETKTSSNFQNINPVQTIDNSASE) shows a compositional bias: polar residues. Residues 91-105 (DASSAEGGSNSAASS) show a composition bias toward low complexity. The segment covering 106-117 (SEEEDSSDSEYE) has biased composition (acidic residues). Residues 226-245 (RLMNSEEREAQDLKDAEASR) show a composition bias toward basic and acidic residues.

This is an uncharacterized protein from Schizosaccharomyces pombe (strain 972 / ATCC 24843) (Fission yeast).